The primary structure comprises 241 residues: Neuromodulin (241 aa).

Basic and acidic residues predominate over residues 1–26 (TKQVEKNEDGDQKIEQDGIKPEDKAH). The tract at residues 1 to 241 (TKQVEKNEDG…EESKADQENA (241 aa)) is disordered. One can recognise an IQ domain in the interval 25–54 (AHKAATKIQASFRGHITRKKLKGEKKGDAP). Composition is skewed to low complexity over residues 80-95 (APAA…AQQE) and 118-131 (SEQP…PAAS). 2 stretches are compositionally biased toward basic and acidic residues: residues 132–147 (SEEK…REST) and 159–171 (KADE…EPKQ). Low complexity predominate over residues 172-198 (ADVPAADTTATTTPAAEDATAKATAQP). Composition is skewed to basic and acidic residues over residues 208 to 220 (TEEK…ETKP) and 232 to 241 (EESKADQENA).

The protein belongs to the neuromodulin family. As to quaternary structure, binds calmodulin with a greater affinity in the absence of Ca(2+) than in its presence. In terms of processing, palmitoylated. Palmitoylation is essential for plasma membrane association.

Its subcellular location is the cell membrane. The protein localises to the cell projection. It localises to the growth cone membrane. It is found in the synapse. The protein resides in the filopodium membrane. Functionally, this protein is associated with nerve growth. It is a major component of the motile 'growth cones' that form the tips of elongating axons. Plays a role in axonal and dendritic filopodia induction. This chain is Neuromodulin (GAP43), found in Serinus canaria (Island canary).